Consider the following 414-residue polypeptide: Esterase FrsA (414 aa).

The protein belongs to the FrsA family.

The enzyme catalyses a carboxylic ester + H2O = an alcohol + a carboxylate + H(+). In terms of biological role, catalyzes the hydrolysis of esters. This Klebsiella pneumoniae (strain 342) protein is Esterase FrsA.